Reading from the N-terminus, the 463-residue chain is uncharacterized protein (463 aa).

It belongs to the UbiD family.

This is an uncharacterized protein from Rhodospirillum rubrum.